A 551-amino-acid chain; its full sequence is FGGY carbohydrate kinase domain-containing protein (551 aa).

The protein belongs to the FGGY kinase family. In terms of tissue distribution, expressed in kidney, lung and small intestine and to a lower extent in liver and detected in cerebrospinal fluid (at protein level).

It catalyses the reaction D-ribulose + ATP = D-ribulose 5-phosphate + ADP + H(+). It participates in carbohydrate metabolism; pentose and glucuronate interconversion. Catalyzes ATP-dependent phosphorylation of D-ribulose at C-5 to form D-ribulose 5-phosphate. Postulated to function in a metabolite repair mechanism by preventing toxic accumulation of free D-ribulose formed by non-specific phosphatase activities. Alternatively, may play a role in regulating D-ribulose 5-phosphate recycling in the pentose phosphate pathway. Can phosphorylate ribitol with low efficiency. This is FGGY carbohydrate kinase domain-containing protein from Homo sapiens (Human).